Here is a 455-residue protein sequence, read N- to C-terminus: Anaerobic glycerol-3-phosphate dehydrogenase subunit B (455 aa).

This sequence belongs to the anaerobic G-3-P dehydrogenase subunit B family. Composed of a catalytic GlpA/B dimer and of membrane bound GlpC. FMN is required as a cofactor.

It carries out the reaction a quinone + sn-glycerol 3-phosphate = dihydroxyacetone phosphate + a quinol. The protein operates within polyol metabolism; glycerol degradation via glycerol kinase pathway; glycerone phosphate from sn-glycerol 3-phosphate (anaerobic route): step 1/1. In terms of biological role, conversion of glycerol 3-phosphate to dihydroxyacetone. Uses fumarate or nitrate as electron acceptor. The polypeptide is Anaerobic glycerol-3-phosphate dehydrogenase subunit B (Aliivibrio fischeri (strain ATCC 700601 / ES114) (Vibrio fischeri)).